The primary structure comprises 527 residues: EGF domain-specific O-linked N-acetylglucosamine transferase (527 aa).

The N-terminal stretch at 1-17 (MLKLLVLGVLLHDVSLS) is a signal peptide. Positions 295–297 (DYD) match the Required for optimal activity motif. N354 is a glycosylation site (N-linked (GlcNAc...) asparagine). The Prevents secretion from ER signature appears at 524-527 (RDEL).

This sequence belongs to the glycosyltransferase 61 family.

Its subcellular location is the endoplasmic reticulum lumen. The catalysed reaction is L-seryl-[protein] + UDP-N-acetyl-alpha-D-glucosamine = 3-O-(N-acetyl-beta-D-glucosaminyl)-L-seryl-[protein] + UDP + H(+). It catalyses the reaction L-threonyl-[protein] + UDP-N-acetyl-alpha-D-glucosamine = 3-O-(N-acetyl-beta-D-glucosaminyl)-L-threonyl-[protein] + UDP + H(+). Catalyzes the transfer of a single N-acetylglucosamine from UDP-GlcNAc to a serine or threonine residue in extracellular proteins resulting in their modification with a beta-linked N-acetylglucosamine (O-GlcNAc). Specifically glycosylates the Thr residue located between the fifth and sixth conserved cysteines of folded EGF-like domains. This is EGF domain-specific O-linked N-acetylglucosamine transferase (EOGT) from Canis lupus familiaris (Dog).